We begin with the raw amino-acid sequence, 127 residues long: Protein ApaG (127 aa).

The ApaG domain occupies 3 to 127 (NDQKYDIKVQ…FILSVPRVLH (125 aa)).

The sequence is that of Protein ApaG from Nitrosomonas eutropha (strain DSM 101675 / C91 / Nm57).